The sequence spans 68 residues: DNA-directed RNA polymerase subunit Rpo10 (68 aa).

4 residues coordinate Zn(2+): cysteine 7, cysteine 10, cysteine 44, and cysteine 45.

Belongs to the archaeal Rpo10/eukaryotic RPB10 RNA polymerase subunit family. In terms of assembly, part of the RNA polymerase complex. The cofactor is Zn(2+).

Its subcellular location is the cytoplasm. The catalysed reaction is RNA(n) + a ribonucleoside 5'-triphosphate = RNA(n+1) + diphosphate. In terms of biological role, DNA-dependent RNA polymerase (RNAP) catalyzes the transcription of DNA into RNA using the four ribonucleoside triphosphates as substrates. This is DNA-directed RNA polymerase subunit Rpo10 from Methanococcus maripaludis (strain C6 / ATCC BAA-1332).